We begin with the raw amino-acid sequence, 316 residues long: Olfactory receptor 5AP2 (316 aa).

The Extracellular portion of the chain corresponds to 1 to 34 (MRLMKEVRGRNQTEVTEFLLLGLSDNPDLQGVLF). The N-linked (GlcNAc...) asparagine glycan is linked to N11. The chain crosses the membrane as a helical span at residues 35–55 (ALFLLIYMANMVGNLGMIVLI). Position 56 (K56) is a topological domain, cytoplasmic. Residues 57–77 (IDLCLHTPMYFFLSSLSFVDA) traverse the membrane as a helical segment. Residues 78–104 (SYSSSVTPKMLVNLMAENKAISFHGCA) lie on the Extracellular side of the membrane. C103 and C195 are joined by a disulfide. The helical transmembrane segment at 105–125 (AQFYFFGSFLGTECFLLAMMA) threads the bilayer. The Cytoplasmic portion of the chain corresponds to 126–135 (YDRYAAIWNP). The helical transmembrane segment at 136 to 156 (LLYPVLVSGRICFLLIATSFL) threads the bilayer. Topologically, residues 157–210 (AGCGNAAIHTGMTFRLSFCGSNRINHFYCDTPPLLKLSCSDTHFNGIVIMAFSS) are extracellular. A helical transmembrane segment spans residues 211-231 (FIVISCVMIVLISYLCIFIAV). The Cytoplasmic portion of the chain corresponds to 232-245 (LKMPSLEGRHKAFS). Residues 246–266 (TCASYLMAVTIFFGTILFMYL) form a helical membrane-spanning segment. Topologically, residues 267-278 (RPTSSYSMEQDK) are extracellular. Residues 279–299 (VVSVFYTVIIPVLNPLIYSLK) traverse the membrane as a helical segment. The Cytoplasmic portion of the chain corresponds to 300 to 316 (NKDVKKALKKILWKHIL).

Belongs to the G-protein coupled receptor 1 family.

The protein resides in the cell membrane. Its function is as follows. Odorant receptor. This Homo sapiens (Human) protein is Olfactory receptor 5AP2.